The chain runs to 258 residues: Cholera enterotoxin subunit A (258 aa).

A signal peptide spans 1–18; that stretch reads MVKIIFVFFIFLSSFSYA. NAD(+) contacts are provided by residues 25–28 and 41–43; these read RADS and MPR. Residue glutamate 130 is part of the active site. Cysteine 205 and cysteine 217 are joined by a disulfide.

The protein belongs to the enterotoxin A family. In terms of assembly, the holotoxin (choleragen) consists of a pentameric ring of B subunits whose central pore is occupied by the A subunit. The A subunit contains two chains, A1 and A2, linked by a disulfide bridge. Interaction with the host protein ARF6 causes a conformation change so that the enterotoxin subunit A1 can bind NAD and catalyze the ADP-ribosylation of the host Gs alpha.

The A1 chain catalyzes the ADP-ribosylation of Gs alpha, a GTP-binding regulatory protein, to activate the adenylate cyclase. This leads to an overproduction of cAMP and eventually to a hypersecretion of chloride and bicarbonate followed by water, resulting in the characteristic cholera stool. The A2 chain tethers A1 to the pentameric ring. The protein is Cholera enterotoxin subunit A (ctxA) of Vibrio cholerae serotype O1 (strain ATCC 39315 / El Tor Inaba N16961).